The sequence spans 97 residues: Eotaxin (97 aa).

The signal sequence occupies residues 1-23 (MQSSTALLFLLLTVTSFTSQVLA). Cystine bridges form between Cys-32–Cys-57 and Cys-33–Cys-73. O-linked (GalNAc...) threonine glycosylation occurs at Thr-94.

Belongs to the intercrine beta (chemokine CC) family. In terms of tissue distribution, expressed constitutively in the thymus. Expression inducible in the lung (type I alveolar epithelial cells), intestine, heart, spleen, kidney.

The protein localises to the secreted. In terms of biological role, in response to the presence of allergens, this protein directly promotes the accumulation of eosinophils (a prominent feature of allergic inflammatory reactions), but not lymphocytes, macrophages or neutrophils. Binds to CCR3. The chain is Eotaxin (Ccl11) from Mus musculus (Mouse).